Reading from the N-terminus, the 392-residue chain is Outer membrane protein assembly factor BamB (392 aa).

A signal peptide spans 1–19 (MQLRKLLLPGLLSVTLLSG). A lipid anchor (N-palmitoyl cysteine) is attached at Cys20. A lipid anchor (S-diacylglycerol cysteine) is attached at Cys20.

It belongs to the BamB family. Part of the Bam complex, which is composed of the outer membrane protein BamA, and four lipoproteins BamB, BamC, BamD and BamE.

It is found in the cell outer membrane. Part of the outer membrane protein assembly complex, which is involved in assembly and insertion of beta-barrel proteins into the outer membrane. The protein is Outer membrane protein assembly factor BamB of Salmonella typhimurium (strain LT2 / SGSC1412 / ATCC 700720).